We begin with the raw amino-acid sequence, 123 residues long: Small ribosomal subunit protein uS12 (123 aa).

3-methylthioaspartic acid is present on Asp-89.

It belongs to the universal ribosomal protein uS12 family. As to quaternary structure, part of the 30S ribosomal subunit. Contacts proteins S8 and S17. May interact with IF1 in the 30S initiation complex.

With S4 and S5 plays an important role in translational accuracy. In terms of biological role, interacts with and stabilizes bases of the 16S rRNA that are involved in tRNA selection in the A site and with the mRNA backbone. Located at the interface of the 30S and 50S subunits, it traverses the body of the 30S subunit contacting proteins on the other side and probably holding the rRNA structure together. The combined cluster of proteins S8, S12 and S17 appears to hold together the shoulder and platform of the 30S subunit. In Methylorubrum extorquens (strain PA1) (Methylobacterium extorquens), this protein is Small ribosomal subunit protein uS12.